A 428-amino-acid chain; its full sequence is Probable oxidoreductase OrdL (428 aa).

This is Probable oxidoreductase OrdL (ordL) from Rhizobium meliloti (strain 1021) (Ensifer meliloti).